The sequence spans 179 residues: MLRFKELYKQKIIESLKKEFSFKNKHEIPKIKKIVINMGVGEAIADSKVINNALNDLTLISGQKPVVTLARKSIATFKLRENMKIGCKVTLRKDRMYDFLERLVIVALPRVKEFRGFSYKSFDGKGNFTFGLKEQIVFPEINYDKIDTIRGMDITIVTSAKTDQESKFLLSGFNLPFYN.

The protein belongs to the universal ribosomal protein uL5 family. As to quaternary structure, part of the 50S ribosomal subunit; part of the 5S rRNA/L5/L18/L25 subcomplex. Contacts the 5S rRNA and the P site tRNA. Forms a bridge to the 30S subunit in the 70S ribosome.

Its function is as follows. This is one of the proteins that bind and probably mediate the attachment of the 5S RNA into the large ribosomal subunit, where it forms part of the central protuberance. In the 70S ribosome it contacts protein S13 of the 30S subunit (bridge B1b), connecting the 2 subunits; this bridge is implicated in subunit movement. Contacts the P site tRNA; the 5S rRNA and some of its associated proteins might help stabilize positioning of ribosome-bound tRNAs. In Rickettsia prowazekii (strain Madrid E), this protein is Large ribosomal subunit protein uL5.